Here is a 2172-residue protein sequence, read N- to C-terminus: DExH-box ATP-dependent RNA helicase DExH13 (2172 aa).

The disordered stretch occupies residues 20-83; that stretch reads YKVNSSLVLN…KSKKKKERCD (64 aa). Over residues 30–73 the composition is skewed to basic and acidic residues; it reads SDERRRDTHESSGEPESLRGRIDPKSFGDRVVRGRPHELDERLN. In terms of domain architecture, Helicase ATP-binding 1 spans 515 to 698; it reads GTALFKADNI…FLRVDLKNGL (184 aa). 528–535 contributes to the ATP binding site; sequence APTGAGKT. The DEIH box motif lies at 640 to 643; the sequence is DEIH. Residues 742–946 enclose the Helicase C-terminal 1 domain; that stretch reads GKHQVLIFVH…NAREACHWLG (205 aa). Residues 1007–1308 form the SEC63 1 domain; that stretch reads TDLGRIASYY…KWLDSPTVLP (302 aa). In terms of domain architecture, Helicase ATP-binding 2 spans 1361-1538; sequence TVLYNTSDNV…WIGASSCGVF (178 aa). ATP is bound at residue 1374 to 1381; the sequence is APTGSGKT. The DELH box signature appears at 1480–1483; the sequence is DELH. The region spanning 1575 to 1772 is the Helicase C-terminal 2 domain; that stretch reads AIVQHAKNKK…NFNAEVVARV (198 aa). Residues 1840 to 2157 form the SEC63 2 domain; the sequence is PLNLGMIASY…YLGCDQEYSF (318 aa).

It localises to the nucleus. It catalyses the reaction ATP + H2O = ADP + phosphate + H(+). Functionally, RNA helicase that plays an essential role in pre-mRNA splicing as component of the U5 snRNP and U4/U6-U5 tri-snRNP complexes. Involved in spliceosome assembly, activation and disassembly. The sequence is that of DExH-box ATP-dependent RNA helicase DExH13 from Arabidopsis thaliana (Mouse-ear cress).